The sequence spans 246 residues: UPF0246 protein str1967 (246 aa).

The protein belongs to the UPF0246 family.

The chain is UPF0246 protein str1967 from Streptococcus thermophilus (strain CNRZ 1066).